Here is a 126-residue protein sequence, read N- to C-terminus: Large ribosomal subunit protein bL12 (126 aa).

The protein belongs to the bacterial ribosomal protein bL12 family. As to quaternary structure, homodimer. Part of the ribosomal stalk of the 50S ribosomal subunit. Forms a multimeric L10(L12)X complex, where L10 forms an elongated spine to which 2 to 4 L12 dimers bind in a sequential fashion. Binds GTP-bound translation factors.

In terms of biological role, forms part of the ribosomal stalk which helps the ribosome interact with GTP-bound translation factors. Is thus essential for accurate translation. In Desulforudis audaxviator (strain MP104C), this protein is Large ribosomal subunit protein bL12.